A 422-amino-acid polypeptide reads, in one-letter code: Probable biofilm formation methyltransferase WspC (422 aa).

The region spanning 1-264 (MNDRFERLLK…LSFVFRRTSE (264 aa)) is the CheR-type methyltransferase domain. S-adenosyl-L-methionine-binding positions include Thr-67, Arg-71, Glu-108, Asp-132, 186–187 (NL), and 205–206 (RN). The interval 289 to 316 (ASIRPSPPPPAKPRQRLSSLVPPASGQP) is disordered. Residues 354–387 (ATVFYWLGLLSDVAGQEQEAQDFYRKALYLEPQH) form a TPR repeat.

Monomer.

Involved in biofilm formation. The chain is Probable biofilm formation methyltransferase WspC (wspC) from Pseudomonas aeruginosa (strain ATCC 15692 / DSM 22644 / CIP 104116 / JCM 14847 / LMG 12228 / 1C / PRS 101 / PAO1).